The sequence spans 264 residues: Expansin-B3 (264 aa).

The first 25 residues, Met1 to Ala25, serve as a signal peptide directing secretion. Positions Gly54 to Lys162 constitute an Expansin-like EG45 domain. 3 disulfide bridges follow: Cys57–Cys86, Cys89–Cys157, and Cys94–Cys100. The 82-residue stretch at Phe175–Ser256 folds into the Expansin-like CBD domain.

It belongs to the expansin family. Expansin B subfamily.

The protein localises to the secreted. It localises to the cell wall. It is found in the membrane. In terms of biological role, may cause loosening and extension of plant cell walls by disrupting non-covalent bonding between cellulose microfibrils and matrix glucans. No enzymatic activity has been found. This Arabidopsis thaliana (Mouse-ear cress) protein is Expansin-B3 (EXPB3).